The chain runs to 411 residues: Arginine deiminase (411 aa).

Cys401 serves as the catalytic Amidino-cysteine intermediate.

This sequence belongs to the arginine deiminase family.

It localises to the cytoplasm. It carries out the reaction L-arginine + H2O = L-citrulline + NH4(+). Its pathway is amino-acid degradation; L-arginine degradation via ADI pathway; carbamoyl phosphate from L-arginine: step 1/2. This is Arginine deiminase from Streptococcus equi subsp. zooepidemicus (strain MGCS10565).